Consider the following 518-residue polypeptide: MMMTKQKPTLTERLNIGGDEVRELKLGATFNPKNTATAFHTIKYDFKPASVDTSRMATVDVGSNNQVTVTVPNLESSGVPQTVYKGNHKKYTKECLIIFDKETGAITLEKLNHNIQVKKTRSEMTNKPSLMPATNAAPMSSGPNGVPMPSGAMAGTGSGPKLENSTMRITSKTKVSTGSRRNNIIDFKPRNSPMQQSSPSRPVASHRSPQSAPAWHANNAQQTLPSIPMIMDDDDFGLSAALHNGGGGGGGQANISGSSTGSSVGQPDYGSVNMGKQRQASSQGHAKRQQQTQRSSPPMQQQQQQQNYGRGGANNNYAQQLHQQQQQQQQQQLQQQQQQMQQRASFSHSNHSNSMPLDLDSPTHHEQAAQSMAQAAAVLEQQIGGELSASSSSSESESSDSDSGSDSDDSTEDDRSTHQQQQPPGQLSQHHHHHMQQQQHMHQLPNLGLGSISPTYNSHQHHQQQQQQHQQQQQQQSHHHHHQQQQQQSSIYASNGGFPNDLLQNDLQLSSNSSDDDD.

Composition is skewed to polar residues over residues 119–128 and 163–182; these read KTRSEMTNKP and ENSTMRITSKTKVSTGSRRN. Disordered stretches follow at residues 119–216 and 241–518; these read KTRS…PAWH and ALHN…DDDD. Serine 192 bears the Phosphoserine mark. Polar residues-rich tracts occupy residues 253–265 and 274–284; these read ANISGSSTGSSVG and MGKQRQASSQG. Residues 289 to 342 show a composition bias toward low complexity; sequence QQQTQRSSPPMQQQQQQQNYGRGGANNNYAQQLHQQQQQQQQQQLQQQQQQMQQ. Polar residues predominate over residues 343-355; that stretch reads RASFSHSNHSNSM. Residues 368–377 are compositionally biased toward low complexity; the sequence is AAQSMAQAAA. Acidic residues predominate over residues 397-412; sequence ESSDSDSGSDSDDSTE. 3 stretches are compositionally biased toward low complexity: residues 418 to 428, 463 to 476, and 500 to 518; these read HQQQQPPGQLS, QQQQQQHQQQQQQQ, and NDLLQNDLQLSSNSSDDDD.

Belongs to the EAF family.

It localises to the nucleus. In terms of biological role, promotes transcriptional elongation by Su(Tpl)/ELL. Essential for development. This Drosophila mojavensis (Fruit fly) protein is Ell-associated factor Eaf.